The primary structure comprises 949 residues: Glycine dehydrogenase (decarboxylating) (949 aa).

Residue Lys702 is modified to N6-(pyridoxal phosphate)lysine.

The protein belongs to the GcvP family. As to quaternary structure, the glycine cleavage system is composed of four proteins: P, T, L and H. Pyridoxal 5'-phosphate is required as a cofactor.

The catalysed reaction is N(6)-[(R)-lipoyl]-L-lysyl-[glycine-cleavage complex H protein] + glycine + H(+) = N(6)-[(R)-S(8)-aminomethyldihydrolipoyl]-L-lysyl-[glycine-cleavage complex H protein] + CO2. Its function is as follows. The glycine cleavage system catalyzes the degradation of glycine. The P protein binds the alpha-amino group of glycine through its pyridoxal phosphate cofactor; CO(2) is released and the remaining methylamine moiety is then transferred to the lipoamide cofactor of the H protein. In Rhodococcoides fascians (Rhodococcus fascians), this protein is Glycine dehydrogenase (decarboxylating).